Here is a 346-residue protein sequence, read N- to C-terminus: NADH-ubiquinone oxidoreductase chain 2 (346 aa).

11 helical membrane passes run P3 to S23, H25 to M45, Y59 to M79, I96 to P116, I122 to L142, I149 to G169, I178 to P198, L200 to I220, T242 to P262, S274 to M294, and I322 to L342.

It belongs to the complex I subunit 2 family. As to quaternary structure, core subunit of respiratory chain NADH dehydrogenase (Complex I) which is composed of 45 different subunits. Interacts with TMEM242.

The protein resides in the mitochondrion inner membrane. It carries out the reaction a ubiquinone + NADH + 5 H(+)(in) = a ubiquinol + NAD(+) + 4 H(+)(out). Its function is as follows. Core subunit of the mitochondrial membrane respiratory chain NADH dehydrogenase (Complex I) which catalyzes electron transfer from NADH through the respiratory chain, using ubiquinone as an electron acceptor. Essential for the catalytic activity and assembly of complex I. In Equus caballus (Horse), this protein is NADH-ubiquinone oxidoreductase chain 2.